We begin with the raw amino-acid sequence, 150 residues long: Detocs response regulatory protein DtcB (150 aa).

The Response regulatory domain maps to 2-150; the sequence is KILIADDNIQ…TDLIKKITEL (149 aa). 4-aspartylphosphate is present on D54.

In terms of processing, probably phosphorylated by DtcA.

Possible phosphate scavenger member of the two-component regulatory system Detocs that confers resistance to bacteriophage. When the system (DtcA-DtcB-DtcC) is expressed in a susceptible E.coli (strain MG1655) it confers resistance to bacteriophages T2, T4, T5, T7, SECphi4, SECphi6 and SECphi27; the level of resistance varies, resistance to T2, T7 and SECphi4 is not very high. DtcA probably autophosphorylates upon sensing viral infection, and subsequently transfers the phosphate signal to DtcC which activates it, leading to an antiviral defense; DtcB (this subunit) may scavenge phosphorylation signals from accidental activation of DtcA. The chain is Detocs response regulatory protein DtcB from Enterobacter cloacae (strain JD6301).